Here is a 423-residue protein sequence, read N- to C-terminus: Anhydromevalonate phosphate decarboxylase (423 aa).

The Mn(2+) site is built by N134 and E197. Catalysis depends on D245, which acts as the Proton acceptor.

It belongs to the UbiD family. It depends on prenylated FMN as a cofactor. The cofactor is Mn(2+).

The catalysed reaction is (2E)-3-methyl-5-phosphooxypent-2-enoate + H(+) = isopentenyl phosphate + CO2. Its pathway is isoprenoid biosynthesis; isopentenyl diphosphate biosynthesis via mevalonate pathway. Its function is as follows. Catalyzes the conversion of trans-anhydromevalonate 5-phosphate (tAHMP) into isopentenyl phosphate. Involved in the archaeal mevalonate (MVA) pathway, which provides fundamental precursors for isoprenoid biosynthesis, such as isopentenyl diphosphate (IPP) and dimethylallyl diphosphate (DMAPP). The polypeptide is Anhydromevalonate phosphate decarboxylase (Methanothermobacter thermautotrophicus (strain ATCC 29096 / DSM 1053 / JCM 10044 / NBRC 100330 / Delta H) (Methanobacterium thermoautotrophicum)).